Consider the following 171-residue polypeptide: 3-hydroxydecanoyl-[acyl-carrier-protein] dehydratase (171 aa).

His70 is an active-site residue.

Belongs to the thioester dehydratase family. FabA subfamily. Homodimer.

The protein resides in the cytoplasm. The catalysed reaction is a (3R)-hydroxyacyl-[ACP] = a (2E)-enoyl-[ACP] + H2O. The enzyme catalyses (3R)-hydroxydecanoyl-[ACP] = (2E)-decenoyl-[ACP] + H2O. It carries out the reaction (2E)-decenoyl-[ACP] = (3Z)-decenoyl-[ACP]. It participates in lipid metabolism; fatty acid biosynthesis. Its function is as follows. Necessary for the introduction of cis unsaturation into fatty acids. Catalyzes the dehydration of (3R)-3-hydroxydecanoyl-ACP to E-(2)-decenoyl-ACP and then its isomerization to Z-(3)-decenoyl-ACP. Can catalyze the dehydratase reaction for beta-hydroxyacyl-ACPs with saturated chain lengths up to 16:0, being most active on intermediate chain length. This chain is 3-hydroxydecanoyl-[acyl-carrier-protein] dehydratase, found in Methylococcus capsulatus (strain ATCC 33009 / NCIMB 11132 / Bath).